Consider the following 82-residue polypeptide: Small ribosomal subunit protein uS17 (82 aa).

It belongs to the universal ribosomal protein uS17 family. Part of the 30S ribosomal subunit.

Functionally, one of the primary rRNA binding proteins, it binds specifically to the 5'-end of 16S ribosomal RNA. This chain is Small ribosomal subunit protein uS17, found in Aeromonas salmonicida (strain A449).